The sequence spans 241 residues: ATP synthase subunit a (241 aa).

5 helical membrane-spanning segments follow: residues 30-50 (GQVF…VLVG), 89-109 (LPFI…GALI), 128-148 (INTT…AGLS), 193-213 (LAVG…VMLL), and 214-234 (GLFT…FYIG).

The protein belongs to the ATPase A chain family. In terms of assembly, F-type ATPases have 2 components, CF(1) - the catalytic core - and CF(0) - the membrane proton channel. CF(1) has five subunits: alpha(3), beta(3), gamma(1), delta(1), epsilon(1). CF(0) has four main subunits: a, b, b' and c.

It localises to the cellular thylakoid membrane. In terms of biological role, key component of the proton channel; it plays a direct role in the translocation of protons across the membrane. This Synechococcus sp. (strain CC9605) protein is ATP synthase subunit a.